The sequence spans 311 residues: Small ribosomal subunit biogenesis GTPase RsgA (311 aa).

Residues 88-246 (SKEKEQVIAA…VIDTPGIREF (159 aa)) form the CP-type G domain. GTP-binding positions include 137–140 (NKID) and 188–196 (GHSGVGKST). Zn(2+) is bound by residues Cys270, Cys275, His277, and Cys283.

Belongs to the TRAFAC class YlqF/YawG GTPase family. RsgA subfamily. As to quaternary structure, monomer. Associates with 30S ribosomal subunit, binds 16S rRNA. Zn(2+) is required as a cofactor.

It is found in the cytoplasm. Functionally, one of several proteins that assist in the late maturation steps of the functional core of the 30S ribosomal subunit. Helps release RbfA from mature subunits. May play a role in the assembly of ribosomal proteins into the subunit. Circularly permuted GTPase that catalyzes slow GTP hydrolysis, GTPase activity is stimulated by the 30S ribosomal subunit. The chain is Small ribosomal subunit biogenesis GTPase RsgA from Chlorobaculum parvum (strain DSM 263 / NCIMB 8327) (Chlorobium vibrioforme subsp. thiosulfatophilum).